We begin with the raw amino-acid sequence, 466 residues long: Amino acid permease 4 (466 aa).

Topologically, residues 1 to 22 (MDVPRPAFKCFDDDGRLKRSGT) are cytoplasmic. Helical transmembrane passes span 23–43 (VWTA…LSLA) and 44–64 (WAIG…FSFV). The Cytoplasmic portion of the chain corresponds to 65-111 (TYYSSTLLSDCYRTGDPVSGKRNYTYMDAVRSILGGFRFKICGLIQY). The helical transmembrane segment at 112-132 (LNLFGITVGYTIAASISMMAI) threads the bilayer. Topologically, residues 133 to 177 (KRSNCFHESGGKNPCHMSSNPYMIMFGVTEILLSQIKDFDQIWWL) are extracellular. The chain crosses the membrane as a helical span at residues 178-198 (SIVAAIMSFTYSAIGLALGII). At 199–226 (QVAANGVVKGSLTGISIGAVTQTQKIWR) the chain is on the cytoplasmic side. The chain crosses the membrane as a helical span at residues 227–247 (TFQALGDIAFAYSYSVVLIEI). Residues 248–266 (QDTVRSPPAESKTMKIATR) lie on the Extracellular side of the membrane. Residues 267–287 (ISIAVTTTFYMLCGCMGYAAF) form a helical membrane-spanning segment. Residues 288 to 290 (GDK) lie on the Cytoplasmic side of the membrane. The chain crosses the membrane as a helical span at residues 291 to 311 (APGNLLTGFGFYNPFWLLDVA). Over 312 to 313 (NA) the chain is Extracellular. A helical transmembrane segment spans residues 314–334 (AIVIHLVGAYQVFAQPIFAFI). At 335–369 (EKQAAARFPDSDLVTKEYEIRIPGFRSPYKVNVFR) the chain is on the cytoplasmic side. Residues 370–390 (AVYRSGFVVLTTVISMLMPFF) form a helical membrane-spanning segment. The Extracellular portion of the chain corresponds to 391–392 (ND). Residues 393 to 413 (VVGILGALGFWPLTVYFPVEM) traverse the membrane as a helical segment. Topologically, residues 414–435 (YIRQRKVERWSMKWVCLQMLSC) are cytoplasmic. Residues 436 to 456 (GCLMITLVAGVGSIAGVMLDL) traverse the membrane as a helical segment. The Extracellular segment spans residues 457-466 (KVYKPFKTTY).

The protein belongs to the amino acid/polyamine transporter 2 family. Amino acid/auxin permease (AAAP) (TC 2.A.18.2) subfamily. Expressed in leaves, stems and flowers.

The protein resides in the cell membrane. Its activity is regulated as follows. Inhibited by 2,4-dinitrophenol. Amino acid-proton symporter. Stereospecific transporter with a broad specificity for neutral amino acids, favoring small amino acids such as alanine, asparagine and glutamine. Also accepts large aromatic residues such as in phenlalanine or tyrosine. The sequence is that of Amino acid permease 4 (AAP4) from Arabidopsis thaliana (Mouse-ear cress).